The sequence spans 425 residues: Orexin/Hypocretin receptor type 1 (425 aa).

The Extracellular portion of the chain corresponds to 1-46 (MEPSATPGPQMGVPTGVGDPSLVPPDYEEEFLSYLWRDYLYPKQYE). The tract at residues 26–41 (DYEEEFLSYLWRDYLY) is required for response to orexin-A. A helical transmembrane segment spans residues 47–67 (WVLIAAYVAVFLVALVGNTLV). Topologically, residues 68–82 (CLAVWRNHHMRTVTN) are cytoplasmic. The chain crosses the membrane as a helical span at residues 83-105 (YFIVNLSLADVLVTAICLPASLL). Residues 106-119 (VDITESWLFGHALC) lie on the Extracellular side of the membrane. A disulfide bridge links Cys-119 with Cys-202. A helical transmembrane segment spans residues 120–140 (KVIPYLQAVSVSVAVLTLSFI). The Cytoplasmic segment spans residues 141–160 (ALDRWYAIYHPLLFKSTARR). A helical membrane pass occupies residues 161 to 182 (ARGSILGIWAVSPAVMVPQAAV). Residues 183 to 213 (MECSSVLPELANRTRLFSVCDERWADDLYPK) lie on the Extracellular side of the membrane. Residues 214 to 235 (IYHSCFFIVTYLAPLGLMAMAY) form a helical membrane-spanning segment. The Cytoplasmic segment spans residues 236–298 (FQIFRKLWGR…QMRARRKTAK (63 aa)). The chain crosses the membrane as a helical span at residues 299–321 (MLMVVLLVFALCYLPISVLNVLK). The Extracellular portion of the chain corresponds to 322–336 (RVFGMFRQTSDREAV). A helical membrane pass occupies residues 337–360 (YACFTFSHWLVYANSAANPIIYNF). Residues 361–425 (LSGKFREQFK…VLTSVTTVLP (65 aa)) lie on the Cytoplasmic side of the membrane.

This sequence belongs to the G-protein coupled receptor 1 family.

The protein resides in the cell membrane. Its function is as follows. Moderately selective excitatory receptor for orexin-A and, with a lower affinity, for orexin-B neuropeptide. Triggers an increase in cytoplasmic Ca(2+) levels in response to orexin-A binding. This is Orexin/Hypocretin receptor type 1 from Sus scrofa (Pig).